The chain runs to 514 residues: Na(+)/H(+) antiporter NhaB (514 aa).

A run of 11 helical transmembrane segments spans residues 13–33 (FMGNSPDWYKLAIITFLIINP), 34–54 (LIFFFVDPFIAGWLLVVEFIF), 96–116 (VILLLVFMVAGIYFMKQLLLF), 136–156 (CFASAFLSAFLDALTVIAVVI), 203–223 (LMMHAGVGTALGGVMTMVGEP), 236–256 (FVTFFIRMSPVTIPVFFAGLA), 304–324 (ALIGIWLIVALALHLAEVGII), 349–369 (EEALPFTALLTVFFSVVAVII), 392–412 (LFYLFNGLLSAISDNVFVGTV), 448–468 (ATPNGQAAFLFLLTSALSPLI), and 479–499 (ALPYTIVMTLLGLLAVEFWLV).

It belongs to the NhaB Na(+)/H(+) (TC 2.A.34) antiporter family.

Its subcellular location is the cell inner membrane. It catalyses the reaction 2 Na(+)(in) + 3 H(+)(out) = 2 Na(+)(out) + 3 H(+)(in). Its function is as follows. Na(+)/H(+) antiporter that extrudes sodium in exchange for external protons. This Proteus mirabilis (strain HI4320) protein is Na(+)/H(+) antiporter NhaB.